Reading from the N-terminus, the 415-residue chain is ER-derived vesicles protein ERV46 (415 aa).

Residues 1–24 (MKRSTLLSLDAFAKTEEDVRVRTR) are Cytoplasmic-facing. A helical membrane pass occupies residues 25–45 (AGGLITLSCILTTLFLLVNEW). Topologically, residues 46-376 (GQFNSVVTRP…VINKEQHGQT (331 aa)) are lumenal. A helical membrane pass occupies residues 377 to 397 (WSGFILNCITSIGGVLAVGTV). Residues 398–415 (MDKLFYKAQRSIWGKKSQ) are Cytoplasmic-facing. The short motif at 402-403 (FY) is the Phenylalanine-tyrosine motif element.

It belongs to the ERGIC family. In terms of assembly, interacts with ERV41.

It localises to the endoplasmic reticulum membrane. It is found in the golgi apparatus membrane. In terms of biological role, constituent of COPII-coated endoplasmic reticulum-derived transport vesicles. Required for efficient transport of a subset of secretory proteins to the Golgi. The C-terminal Phe-Tyr motif is required for exit from the endoplasmic reticulum. Facilitates retrograde transport from the Golgi to the endoplasmic reticulum. The sequence is that of ER-derived vesicles protein ERV46 (ERV46) from Saccharomyces cerevisiae (strain ATCC 204508 / S288c) (Baker's yeast).